The sequence spans 471 residues: uncharacterized protein (471 aa).

4 consecutive transmembrane segments (helical) span residues 10 to 30 (ALWLLDFLTFNISFLLSLFVI), 46 to 66 (IDDRTYIHAVLAGICVGWFAI), 87 to 107 (TLIIFAIFELAIVAFPKLYFS), and 280 to 300 (IVVGSLAIIIFSPVLLYLYFA).

It belongs to the bacterial sugar transferase family.

The protein resides in the cell membrane. Its pathway is glycan metabolism; exopolysaccharide biosynthesis. May function as a sugar transferase. This is an uncharacterized protein from Haemophilus influenzae (strain ATCC 51907 / DSM 11121 / KW20 / Rd).